Consider the following 776-residue polypeptide: Ecdysone receptor (776 aa).

Residues 1–290 (MYRLNIVSTN…GPTPRQQEEL (290 aa)) are modulating. A disordered region spans residues 199–283 (NEEWISSPSP…DAKKQKKGPT (85 aa)). The span at 204–213 (SSPSPGSVPG) shows a compositional bias: low complexity. Polar residues-rich tracts occupy residues 227 to 245 (TTYT…STGS) and 261 to 270 (SPSSSLNGYT). A DNA-binding region (nuclear receptor) is located at residues 288–363 (EELCLVCGDR…VGMRPECVVP (76 aa)). NR C4-type zinc fingers lie at residues 291-311 (CLVC…CEGC) and 327-346 (CKFG…CQEC). Residues 437–673 (NQMAVIYKLI…FLEEIWDVQD (237 aa)) enclose the NR LBD domain. The segment covering 679-688 (QAQMHSHGTQ) has biased composition (polar residues). Residues 679 to 776 (QAQMHSHGTQ…VPGLGMLDQV (98 aa)) are disordered. Residues 689 to 745 (SSSSSSSSSSSSSNGSSNGNSSSNSNSSQHGPHPHPHGQQLTPNQQQHQQQHSQLQQ) are compositionally biased toward low complexity.

This sequence belongs to the nuclear hormone receptor family. NR1 subfamily. As to quaternary structure, heterodimer of USP and ECR. Only the heterodimer is capable of high-affinity binding to ecdysone. A peak level expression is seen in the fat body of previtellogenic female mosquitos at one and two days after eclosion, levels fall three-fold at three days posteclosion.

The protein resides in the nucleus. Its function is as follows. Receptor for ecdysone. Binds to ecdysone response elements (ECRES). The chain is Ecdysone receptor (EcR) from Aedes aegypti (Yellowfever mosquito).